The chain runs to 523 residues: MRWKYAAWILIAVVDVMCCSSEEKSASVSFVTRPGSQVIAFPFIFVGHSIVVLPTTKYSNLKRNAKSMEDLTFLLSNLSHVVWSLTIDATVYKDGGRLEKLFDKRMRGYLDGVSLDVLRMYVNGSKTFSELLQIVYERTFECDSRRSRQMARYGESLIREIDNMIESMPAEMSEEEKEKMRSDLNNNRKYVESFHDTEKWRQVVEAEKMVCNTCKEICLGLKEEELMGLLAEGSAKKYIKASAGESKVSSTVYPEYIVVDISLLLDAHREHGGDVTKELVKQMLLGKKEEEIDKRYIGKVANAVKERRRRGEKEIEKRVKKLLRDEEKAKSKKRGKRKSVGVSEAKEEEKKESETEEVEAGEEVEMPSEEVGGARRKTGKKSEGGRKRYKIHRRVLRWRKSPEKIKEEWDKGSEERWRGKSLEEIREQKVFHDIMGVLELLRSPDADRFFMDTGDYTKGGSERQRMVAIGVLESGGKRMLGVVEVGTFKDCPSGCPVVYHLMFRVTGIEGMGDVMRRGGGQSW.

The disordered stretch occupies residues 326 to 386 (EEKAKSKKRG…KTGKKSEGGR (61 aa)). Residues 330 to 339 (KSKKRGKRKS) are compositionally biased toward basic residues. The span at 344–353 (EAKEEEKKES) shows a compositional bias: basic and acidic residues. Acidic residues predominate over residues 354-368 (ETEEVEAGEEVEMPS).

The protein belongs to the UPF0329 family.

In Encephalitozoon cuniculi (strain GB-M1) (Microsporidian parasite), this protein is UPF0329 protein ECU02_0050.